We begin with the raw amino-acid sequence, 156 residues long: Small ribosomal subunit protein uS7 (156 aa).

It belongs to the universal ribosomal protein uS7 family. As to quaternary structure, part of the 30S ribosomal subunit. Contacts proteins S9 and S11.

Functionally, one of the primary rRNA binding proteins, it binds directly to 16S rRNA where it nucleates assembly of the head domain of the 30S subunit. Is located at the subunit interface close to the decoding center, probably blocks exit of the E-site tRNA. The chain is Small ribosomal subunit protein uS7 from Carsonella ruddii (strain PV).